Here is a 277-residue protein sequence, read N- to C-terminus: Kallikrein-13 (277 aa).

Positions 1-16 (MWPLALVIASLTLALS) are cleaved as a signal peptide. Asn30 carries an N-linked (GlcNAc...) asparagine glycan. One can recognise a Peptidase S1 domain in the interval 36 to 263 (LPGGYTCFPH…YVLWIRETIR (228 aa)). 5 disulfide bridges follow: Cys42–Cys178, Cys61–Cys77, Cys157–Cys224, Cys189–Cys203, and Cys214–Cys239. Active-site charge relay system residues include His76 and Asp124. Ser218 serves as the catalytic Charge relay system. N-linked (GlcNAc...) asparagine glycosylation is present at Asn225.

Belongs to the peptidase S1 family. Kallikrein subfamily. In terms of tissue distribution, expressed in prostate, breast, testis and salivary gland.

The protein resides in the secreted. This Homo sapiens (Human) protein is Kallikrein-13 (KLK13).